The following is a 256-amino-acid chain: Thiazole synthase (256 aa).

Residue Lys-95 is the Schiff-base intermediate with DXP of the active site. Residues Gly-156, 182-183, and 204-205 each bind 1-deoxy-D-xylulose 5-phosphate; these read AG and NT.

Belongs to the ThiG family. In terms of assembly, homotetramer. Forms heterodimers with either ThiH or ThiS.

Its subcellular location is the cytoplasm. The enzyme catalyses [ThiS sulfur-carrier protein]-C-terminal-Gly-aminoethanethioate + 2-iminoacetate + 1-deoxy-D-xylulose 5-phosphate = [ThiS sulfur-carrier protein]-C-terminal Gly-Gly + 2-[(2R,5Z)-2-carboxy-4-methylthiazol-5(2H)-ylidene]ethyl phosphate + 2 H2O + H(+). The protein operates within cofactor biosynthesis; thiamine diphosphate biosynthesis. Catalyzes the rearrangement of 1-deoxy-D-xylulose 5-phosphate (DXP) to produce the thiazole phosphate moiety of thiamine. Sulfur is provided by the thiocarboxylate moiety of the carrier protein ThiS. In vitro, sulfur can be provided by H(2)S. The sequence is that of Thiazole synthase from Escherichia coli O127:H6 (strain E2348/69 / EPEC).